The sequence spans 251 residues: Methionine aminopeptidase (251 aa).

A substrate-binding site is contributed by histidine 79. Residues aspartate 96, aspartate 107, and histidine 170 each contribute to the a divalent metal cation site. Histidine 177 is a substrate binding site. Residues glutamate 204 and glutamate 235 each contribute to the a divalent metal cation site.

The protein belongs to the peptidase M24A family. Methionine aminopeptidase type 1 subfamily. In terms of assembly, monomer. The cofactor is Co(2+). Requires Zn(2+) as cofactor. Mn(2+) serves as cofactor. Fe(2+) is required as a cofactor.

It catalyses the reaction Release of N-terminal amino acids, preferentially methionine, from peptides and arylamides.. Its function is as follows. Removes the N-terminal methionine from nascent proteins. The N-terminal methionine is often cleaved when the second residue in the primary sequence is small and uncharged (Met-Ala-, Cys, Gly, Pro, Ser, Thr, or Val). Requires deformylation of the N(alpha)-formylated initiator methionine before it can be hydrolyzed. In Borreliella burgdorferi (strain ATCC 35210 / DSM 4680 / CIP 102532 / B31) (Borrelia burgdorferi), this protein is Methionine aminopeptidase.